Consider the following 253-residue polypeptide: Triosephosphate isomerase (253 aa).

9–11 (NWK) provides a ligand contact to substrate. The Electrophile role is filled by H95. The Proton acceptor role is filled by E167. Substrate-binding positions include G173, S213, and 234-235 (GG). S213 carries the post-translational modification Phosphoserine.

Belongs to the triosephosphate isomerase family. Homodimer.

Its subcellular location is the cytoplasm. The catalysed reaction is D-glyceraldehyde 3-phosphate = dihydroxyacetone phosphate. Its pathway is carbohydrate biosynthesis; gluconeogenesis. The protein operates within carbohydrate degradation; glycolysis; D-glyceraldehyde 3-phosphate from glycerone phosphate: step 1/1. Functionally, involved in the gluconeogenesis. Catalyzes stereospecifically the conversion of dihydroxyacetone phosphate (DHAP) to D-glyceraldehyde-3-phosphate (G3P). The polypeptide is Triosephosphate isomerase (Bacillus licheniformis (strain ATCC 14580 / DSM 13 / JCM 2505 / CCUG 7422 / NBRC 12200 / NCIMB 9375 / NCTC 10341 / NRRL NRS-1264 / Gibson 46)).